Consider the following 467-residue polypeptide: ATP synthase subunit beta (467 aa).

Gly-152–Thr-159 contacts ATP.

It belongs to the ATPase alpha/beta chains family. F-type ATPases have 2 components, CF(1) - the catalytic core - and CF(0) - the membrane proton channel. CF(1) has five subunits: alpha(3), beta(3), gamma(1), delta(1), epsilon(1). CF(0) has three main subunits: a(1), b(2) and c(9-12). The alpha and beta chains form an alternating ring which encloses part of the gamma chain. CF(1) is attached to CF(0) by a central stalk formed by the gamma and epsilon chains, while a peripheral stalk is formed by the delta and b chains.

It localises to the cell membrane. The catalysed reaction is ATP + H2O + 4 H(+)(in) = ADP + phosphate + 5 H(+)(out). Its function is as follows. Produces ATP from ADP in the presence of a proton gradient across the membrane. The catalytic sites are hosted primarily by the beta subunits. The polypeptide is ATP synthase subunit beta (Caldicellulosiruptor saccharolyticus (strain ATCC 43494 / DSM 8903 / Tp8T 6331)).